The chain runs to 296 residues: Centromere protein O (296 aa).

A coiled-coil region spans residues 17–105 (VLAHLERLET…NMKAILQAYR (89 aa)).

It belongs to the CENP-O/MCM21 family. As to quaternary structure, component of the CENPA-CAD complex, composed of CENPI, CENPK, CENPL, CENPO, CENPP, CENPQ, CENPR and CENPS. The CENPA-CAD complex interacts with the CENPA-NAC complex, at least composed of CENPA, CENPC, CENPH, CENPM, CENPN, CENPT and CENPU.

It is found in the nucleus. The protein localises to the chromosome. Its subcellular location is the centromere. The protein resides in the kinetochore. Component of the CENPA-CAD (nucleosome distal) complex, a complex recruited to centromeres which is involved in assembly of kinetochore proteins, mitotic progression and chromosome segregation. May be involved in incorporation of newly synthesized CENPA into centromeres via its interaction with the CENPA-NAC complex. Modulates the kinetochore-bound levels of NDC80 complex. The polypeptide is Centromere protein O (CENPO) (Bos taurus (Bovine)).